Consider the following 339-residue polypeptide: MVREEVAGSTQTLQWKCVESRVDSKRLYYGRFILSPLRKGQADTVGIALRRALLGEIEGTCITRAKFGSVPHEYSTIAGIEESVQEILLNLKEIVLRSNLYGVRDASICVKGPRYITAQDIILPPSVEIVDTAQPIANLTEPIDFCIDLQIKRDRGYQTELRKNYQDGSYPIDAVSMPVRNVNYSIFSCGNGNEKHEILFLEIWTNGSLTPKEALYEASRNLIDLFLPFLHAEEEGTSFEENKNRFTPPPFTFQKRLTNLKKNKKGIPLNCIFIDQLELTSRTYNCLKRANIHTLLDLLSKTEEDLLRIDSFRMEDRKHIWDTLEKHLPIDLLKNKLSF.

Residues 1 to 233 (MVREEVAGST…DLFLPFLHAE (233 aa)) are alpha N-terminal domain (alpha-NTD). The interval 264–339 (KKGIPLNCIF…IDLLKNKLSF (76 aa)) is alpha C-terminal domain (alpha-CTD).

It belongs to the RNA polymerase alpha chain family. In terms of assembly, in plastids the minimal PEP RNA polymerase catalytic core is composed of four subunits: alpha, beta, beta', and beta''. When a (nuclear-encoded) sigma factor is associated with the core the holoenzyme is formed, which can initiate transcription.

It localises to the plastid. It is found in the chloroplast. It carries out the reaction RNA(n) + a ribonucleoside 5'-triphosphate = RNA(n+1) + diphosphate. Its function is as follows. DNA-dependent RNA polymerase catalyzes the transcription of DNA into RNA using the four ribonucleoside triphosphates as substrates. In Thinopyrum bessarabicum (Wheatgrass), this protein is DNA-directed RNA polymerase subunit alpha.